Here is a 111-residue protein sequence, read N- to C-terminus: Large ribosomal subunit protein uL22 (111 aa).

This sequence belongs to the universal ribosomal protein uL22 family. Part of the 50S ribosomal subunit.

In terms of biological role, this protein binds specifically to 23S rRNA; its binding is stimulated by other ribosomal proteins, e.g. L4, L17, and L20. It is important during the early stages of 50S assembly. It makes multiple contacts with different domains of the 23S rRNA in the assembled 50S subunit and ribosome. Its function is as follows. The globular domain of the protein is located near the polypeptide exit tunnel on the outside of the subunit, while an extended beta-hairpin is found that lines the wall of the exit tunnel in the center of the 70S ribosome. The sequence is that of Large ribosomal subunit protein uL22 from Clostridium perfringens (strain ATCC 13124 / DSM 756 / JCM 1290 / NCIMB 6125 / NCTC 8237 / Type A).